Consider the following 368-residue polypeptide: MSILEKVQPIETMLPERYYTMSTEDMEKRVREIKEKMGETLFIPGHHYQKDEVVQFSDAAGDSLQLAQVAASNKEAKYIVFCGVHFMAETADMLTTDEQVVILPDMRAGCSMADMADIEQTERAWKELTKLFGDTMIPLTYVNSTAAIKAFCGRNGGATVTSSNAKQMVSWAFTQKERLVFLPDQHLGRNTAYDLGIPLDKMAVWDPHTDSLEYDGDIEEIQVILWKGHCSVHQNFTVKNIENVRKNHPDMNIIVHPECCYEVVAASDYAGSTKYIIDMIESAPSGSKWAIGTEMNLVNRIIQQHPDKEIVSLNPFMCPCLTMNRIDLPHLLWALETIERGEEINVISVDKQVTEEAVLALNRMLERV.

The iminosuccinate site is built by His-46 and Ser-63. Cys-110 is a [4Fe-4S] cluster binding site. Residues 141-143 and Ser-162 contribute to the iminosuccinate site; that span reads YVN. [4Fe-4S] cluster is bound at residue Cys-230. Iminosuccinate-binding positions include 256-258 and Thr-273; that span reads HPE. Residue Cys-320 coordinates [4Fe-4S] cluster.

Belongs to the quinolinate synthase family. Type 3 subfamily. It depends on [4Fe-4S] cluster as a cofactor.

It localises to the cytoplasm. The enzyme catalyses iminosuccinate + dihydroxyacetone phosphate = quinolinate + phosphate + 2 H2O + H(+). The protein operates within cofactor biosynthesis; NAD(+) biosynthesis; quinolinate from iminoaspartate: step 1/1. Its function is as follows. Catalyzes the condensation of iminoaspartate with dihydroxyacetone phosphate to form quinolinate. The chain is Quinolinate synthase from Bacillus thuringiensis subsp. konkukian (strain 97-27).